Here is a 162-residue protein sequence, read N- to C-terminus: Regulatory protein RecX (162 aa).

It belongs to the RecX family.

It localises to the cytoplasm. Functionally, modulates RecA activity. This Xanthomonas axonopodis pv. citri (strain 306) protein is Regulatory protein RecX.